Consider the following 301-residue polypeptide: Hydroxymethylglutaryl-CoA lyase (301 aa).

A Pyruvate carboxyltransferase domain is found at 4-271; the sequence is VKVFEVGPRD…STGVDLEAVA (268 aa). Residue R12 participates in substrate binding. D13, H204, and H206 together coordinate a divalent metal cation. C237 is an active-site residue. An a divalent metal cation-binding site is contributed by N246.

It belongs to the HMG-CoA lyase family.

The catalysed reaction is (3S)-3-hydroxy-3-methylglutaryl-CoA = acetoacetate + acetyl-CoA. It functions in the pathway metabolic intermediate metabolism; (S)-3-hydroxy-3-methylglutaryl-CoA degradation; acetoacetate from (S)-3-hydroxy-3-methylglutaryl-CoA: step 1/1. In terms of biological role, involved in the catabolism of branched amino acids such as leucine. In Pseudomonas mevalonii, this protein is Hydroxymethylglutaryl-CoA lyase (mvaB).